The sequence spans 330 residues: Ferredoxin--NADP reductase (330 aa).

FAD-binding residues include Glu-35, Gln-43, Tyr-48, Val-90, Phe-123, Asp-285, and Thr-326.

It belongs to the ferredoxin--NADP reductase type 2 family. As to quaternary structure, homodimer. It depends on FAD as a cofactor.

It carries out the reaction 2 reduced [2Fe-2S]-[ferredoxin] + NADP(+) + H(+) = 2 oxidized [2Fe-2S]-[ferredoxin] + NADPH. In Streptococcus agalactiae serotype Ia (strain ATCC 27591 / A909 / CDC SS700), this protein is Ferredoxin--NADP reductase.